The primary structure comprises 206 residues: 2,3-bisphosphoglycerate-dependent phosphoglycerate mutase (206 aa).

Substrate contacts are provided by residues 9–16 (RHGQSEWN), 22–23 (TG), Arg61, 88–91 (ERDY), Lys99, 115–116 (RR), and 159–160 (GN). The Tele-phosphohistidine intermediate role is filled by His10. Catalysis depends on Glu88, which acts as the Proton donor/acceptor.

The protein belongs to the phosphoglycerate mutase family. BPG-dependent PGAM subfamily. In terms of assembly, homodimer.

It catalyses the reaction (2R)-2-phosphoglycerate = (2R)-3-phosphoglycerate. It participates in carbohydrate degradation; glycolysis; pyruvate from D-glyceraldehyde 3-phosphate: step 3/5. Functionally, catalyzes the interconversion of 2-phosphoglycerate and 3-phosphoglycerate. The protein is 2,3-bisphosphoglycerate-dependent phosphoglycerate mutase of Brucella ovis (strain ATCC 25840 / 63/290 / NCTC 10512).